Reading from the N-terminus, the 304-residue chain is Mas-related G-protein coupled receptor member A1 (304 aa).

The Extracellular portion of the chain corresponds to 1–17; it reads MDNTIPGGINITILIPN. N-linked (GlcNAc...) asparagine glycosylation occurs at Asn-10. A helical membrane pass occupies residues 18–38; it reads LMIIIFGLVGLTGNGIVFWLL. Over 39–53 the chain is Cytoplasmic; it reads GFCLHRNAFSVYILN. The helical transmembrane segment at 54–74 threads the bilayer; it reads LALADFFFLLGHIIDSILLLL. A topological domain (extracellular) is located at residue Asn-75. A helical transmembrane segment spans residues 76-96; sequence VFYPITFLLCFYTIMMVLYIA. At 97–131 the chain is on the cytoplasmic side; sequence GLSMLSAISTERCLSVLCPIWYHCHRPEHTSTVMC. The chain crosses the membrane as a helical span at residues 132–152; sequence AVIWVLSLLICILNSYFCGFL. Topologically, residues 153–166 are extracellular; the sequence is NTQYKNENGCLALN. The helical transmembrane segment at 167–187 threads the bilayer; the sequence is FFTAAYLMFLFVVLCLSSLAL. Over 188-206 the chain is Cytoplasmic; that stretch reads VARLFCGTGQIKLTRLYVT. A helical membrane pass occupies residues 207–227; it reads IILSILVFLLCGLPFGIHWFL. At 228 to 243 the chain is on the extracellular side; the sequence is LFKIKDDFHVFDLGFY. Residues 244 to 264 form a helical membrane-spanning segment; that stretch reads LASVVLTAINSCANPIIYFFV. The Cytoplasmic portion of the chain corresponds to 265 to 304; the sequence is GSFRHRLKHQTLKMVLQNALQDTPETAKIMVEMSRSKSEP.

The protein belongs to the G-protein coupled receptor 1 family. Mas subfamily. In terms of tissue distribution, expressed in a subset of sensory neurons that includes nociceptors. Expressed in the subclass of non-peptidergic sensory neurons that are IB4(+) and VR1(-).

Its subcellular location is the cell membrane. Functionally, orphan receptor activated by a subset of RFamide-family neuropeptides such as FLRF-amide and FMRF-amide. Mediates its action by association with G proteins that activate a phosphatidylinositol-calcium second messenger system. Its effect is mediated by G(q) and G(11) proteins. May regulate the function of nociceptive neurons by modulation of pain perception. This chain is Mas-related G-protein coupled receptor member A1 (Mrgpra1), found in Mus musculus (Mouse).